We begin with the raw amino-acid sequence, 197 residues long: Nucleoside triphosphate pyrophosphatase (197 aa).

Catalysis depends on Asp70, which acts as the Proton acceptor.

Belongs to the Maf family. A divalent metal cation serves as cofactor.

Its subcellular location is the cytoplasm. The catalysed reaction is a ribonucleoside 5'-triphosphate + H2O = a ribonucleoside 5'-phosphate + diphosphate + H(+). The enzyme catalyses a 2'-deoxyribonucleoside 5'-triphosphate + H2O = a 2'-deoxyribonucleoside 5'-phosphate + diphosphate + H(+). Nucleoside triphosphate pyrophosphatase. May have a dual role in cell division arrest and in preventing the incorporation of modified nucleotides into cellular nucleic acids. In Shigella flexneri, this protein is Nucleoside triphosphate pyrophosphatase (yhdE).